The following is a 36-amino-acid chain: Thrombin-like enzyme TLP (36 aa).

Residues 1–36 (IGGFECNEHEHRSLVYLYNSAGFFCAGTLLNHEWVV) enclose the Peptidase S1 domain.

Belongs to the peptidase S1 family. Snake venom subfamily. As to quaternary structure, monomer. As to expression, expressed by the venom gland.

The protein resides in the secreted. Its function is as follows. Thrombin-like snake venom serine protease. Shows strong hydrolytic activity towards Boc-Asp(oBzl)-Pro-Arg-MCA, a synthetic substrate for thrombin. This chain is Thrombin-like enzyme TLP, found in Naja naja (Indian cobra).